A 211-amino-acid polypeptide reads, in one-letter code: LexA repressor (211 aa).

The H-T-H motif DNA-binding region spans 28 to 48 (VREVGEAVGLSSSSTIHGHIE). Residues Ser132 and Lys170 each act as for autocatalytic cleavage activity in the active site.

This sequence belongs to the peptidase S24 family. Homodimer.

The catalysed reaction is Hydrolysis of Ala-|-Gly bond in repressor LexA.. In terms of biological role, represses a number of genes involved in the response to DNA damage (SOS response), including recA and lexA. In the presence of single-stranded DNA, RecA interacts with LexA causing an autocatalytic cleavage which disrupts the DNA-binding part of LexA, leading to derepression of the SOS regulon and eventually DNA repair. The chain is LexA repressor from Leuconostoc citreum (strain KM20).